We begin with the raw amino-acid sequence, 356 residues long: sn-glycerol-3-phosphate import ATP-binding protein UgpC (356 aa).

One can recognise an ABC transporter domain in the interval 4 to 235 (LKLQAVTKSW…PASRFVASFI (232 aa)). Residue 37–44 (GPSGCGKS) coordinates ATP.

The protein belongs to the ABC transporter superfamily. sn-glycerol-3-phosphate importer (TC 3.A.1.1.3) family. In terms of assembly, the complex is composed of two ATP-binding proteins (UgpC), two transmembrane proteins (UgpA and UgpE) and a solute-binding protein (UgpB).

Its subcellular location is the cell inner membrane. The catalysed reaction is sn-glycerol 3-phosphate(out) + ATP + H2O = sn-glycerol 3-phosphate(in) + ADP + phosphate + H(+). Functionally, part of the ABC transporter complex UgpBAEC involved in sn-glycerol-3-phosphate (G3P) import. Responsible for energy coupling to the transport system. The polypeptide is sn-glycerol-3-phosphate import ATP-binding protein UgpC (Salmonella typhi).